The following is a 353-amino-acid chain: MGRPATPQQTAFHIPFPRAISPDVSAVHPGSMAWLRRHGMLRSDASARRVDGWRLTELAGRFFPDARGEDLRLGADVMGFFFLFDDQFDHPGGLRAEAVAVSKRLLHLTSLPAGPAPEGAGPVVAAWADLWNRSCQGMSSAWRVRAAREWRRYFVGNLEESVAREGMSGESVEDYLRLRAMTIGTTPVYDLCERTQHFEIPDEVLHSHHVQAMRDLATEIVVLCNDVASTIKESARGETLNAVLLLERHHEAERGPAVARVQRMVEARLAAFRRLRDRTSRTCAALDLTAEQCDRVDRYVRTALMSVVRGNYDWQQRSARFSADDARPGSLPGYLDDLVGHSGVVGPPPVDGS.

Residues D85 and D89 each coordinate Mg(2+). The DDXXD motif motif lies at 85-89; it reads DDQFD. R179 lines the substrate pocket. Mg(2+) contacts are provided by N225 and S229. Residue K232 coordinates substrate. E233 contributes to the Mg(2+) binding site. 320–321 contributes to the substrate binding site; the sequence is RF.

Belongs to the terpene synthase family. Requires Mg(2+) as cofactor.

It catalyses the reaction (2E,6E)-farnesyl diphosphate = (-)-(E)-beta-caryophyllene + diphosphate. Its pathway is secondary metabolite biosynthesis; terpenoid biosynthesis. Its function is as follows. Catalyzes the conversion of (2E,6E)-farnesyl diphosphate (FPP) to yield the bicyclic sesquiterpene (2S,10R)-(-)-(E)-beta-caryophyllene via a probable 1,10-cyclization, which could involve the abstraction of the pyrophosphate from FPP to yield a (E,E)-germacradienyl cation. In Saccharothrix espanaensis (strain ATCC 51144 / DSM 44229 / JCM 9112 / NBRC 15066 / NRRL 15764), this protein is (-)-beta-caryophyllene synthase ((2E,6E)-farnesyl diphosphate cyclizing) (ptlA).